The chain runs to 1597 residues: Mitogen-activated protein kinase kinase kinase 4 (1597 aa).

Disordered regions lie at residues 1–128 and 424–465; these read MRDA…VETV and SPRP…PRVP. The segment covering 59–69 has biased composition (acidic residues); sequence SDPEDFSDETN. Serine 77 carries the phosphoserine modification. Positions 84–94 are enriched in basic residues; the sequence is QMKRLSAKHQR. Position 424 is a phosphoserine (serine 424). Threonine 440 carries the phosphothreonine modification. At serine 449 the chain carries Phosphoserine. Over residues 449–458 the composition is skewed to acidic residues; it reads SGTEESDEEP. Threonine 451 bears the Phosphothreonine mark. 2 positions are modified to phosphoserine: serine 454 and serine 492. 3 disordered regions span residues 1137–1157, 1190–1220, and 1233–1263; these read RPVKVPRCHSDPPNPHLIIPT, AAGRPGPGGGDSVPAKPVNTAPDTRGSSVPE, and FRSLSRHSSPTEERDEPAYPRSDSSGSTRRS. Over residues 1210–1219 the composition is skewed to polar residues; that stretch reads APDTRGSSVP. Phosphoserine is present on residues serine 1241 and serine 1263. Over residues 1241-1250 the composition is skewed to basic and acidic residues; that stretch reads SPTEERDEPA. Residues 1332-1590 form the Protein kinase domain; that stretch reads WQRGNKIGEG…ASQLLDHAFV (259 aa). Residues 1338–1346 and lysine 1361 contribute to the ATP site; that span reads IGEGQYGKV. The active-site Proton acceptor is aspartate 1452.

The protein belongs to the protein kinase superfamily. STE Ser/Thr protein kinase family. MAP kinase kinase kinase subfamily. As to quaternary structure, monomer and homodimer. Homodimerization enhances kinase activity. Interacts with CDC42. Interacts with TRAF4; this promotes homodimerization. Binds both upstream activators and downstream substrates in multimolecular complexes. Interacts with AXIN1 and DIXDC1; interaction with DIXDC1 prevents interaction with AXIN1. Interacts with GADD45 and MAP2K6. Interacts with ZFP36; this interaction enhances the association with SH3KBP1/CIN85. Interacts with SH3KBP1; this interaction enhances the association with ZFP36. Mg(2+) is required as a cofactor. Widely expressed. High expression was found in skeletal muscle, kidney, testis followed by heart brain and lung. Low expression was found in spleen.

The protein localises to the cytoplasm. The protein resides in the perinuclear region. The catalysed reaction is L-seryl-[protein] + ATP = O-phospho-L-seryl-[protein] + ADP + H(+). It carries out the reaction L-threonyl-[protein] + ATP = O-phospho-L-threonyl-[protein] + ADP + H(+). N-terminal autoinhibitory domain interacts with the C-terminal kinase domain, inhibiting kinase activity, and preventing interaction with its substrate, MAP2K6. The GADD45 proteins activate the kinase by binding to the N-terminal domain. Activated by phosphorylation on Thr-1494. In terms of biological role, component of a protein kinase signal transduction cascade. Activates the CSBP2, P38 and JNK MAPK pathways, but not the ERK pathway. Specifically phosphorylates and activates MAP2K4 and MAP2K6. In Mus musculus (Mouse), this protein is Mitogen-activated protein kinase kinase kinase 4 (Map3k4).